We begin with the raw amino-acid sequence, 349 residues long: Phosphate acyltransferase (349 aa).

It belongs to the PlsX family. As to quaternary structure, homodimer. Probably interacts with PlsY.

The protein localises to the cytoplasm. The catalysed reaction is a fatty acyl-[ACP] + phosphate = an acyl phosphate + holo-[ACP]. The protein operates within lipid metabolism; phospholipid metabolism. Catalyzes the reversible formation of acyl-phosphate (acyl-PO(4)) from acyl-[acyl-carrier-protein] (acyl-ACP). This enzyme utilizes acyl-ACP as fatty acyl donor, but not acyl-CoA. The protein is Phosphate acyltransferase of Rhodospirillum rubrum (strain ATCC 11170 / ATH 1.1.1 / DSM 467 / LMG 4362 / NCIMB 8255 / S1).